The chain runs to 237 residues: Phosphoribosylaminoimidazole-succinocarboxamide synthase (237 aa).

This sequence belongs to the SAICAR synthetase family.

The enzyme catalyses 5-amino-1-(5-phospho-D-ribosyl)imidazole-4-carboxylate + L-aspartate + ATP = (2S)-2-[5-amino-1-(5-phospho-beta-D-ribosyl)imidazole-4-carboxamido]succinate + ADP + phosphate + 2 H(+). It participates in purine metabolism; IMP biosynthesis via de novo pathway; 5-amino-1-(5-phospho-D-ribosyl)imidazole-4-carboxamide from 5-amino-1-(5-phospho-D-ribosyl)imidazole-4-carboxylate: step 1/2. This chain is Phosphoribosylaminoimidazole-succinocarboxamide synthase, found in Baumannia cicadellinicola subsp. Homalodisca coagulata.